The primary structure comprises 364 residues: Methylthioribose-1-phosphate isomerase (364 aa).

Substrate contacts are provided by residues 53-55 (RGA), arginine 90, and glutamine 200. Aspartate 241 acts as the Proton donor in catalysis. Residue 251-252 (NK) coordinates substrate.

The protein belongs to the eIF-2B alpha/beta/delta subunits family. MtnA subfamily.

It catalyses the reaction 5-(methylsulfanyl)-alpha-D-ribose 1-phosphate = 5-(methylsulfanyl)-D-ribulose 1-phosphate. The protein operates within amino-acid biosynthesis; L-methionine biosynthesis via salvage pathway; L-methionine from S-methyl-5-thio-alpha-D-ribose 1-phosphate: step 1/6. Functionally, catalyzes the interconversion of methylthioribose-1-phosphate (MTR-1-P) into methylthioribulose-1-phosphate (MTRu-1-P). This is Methylthioribose-1-phosphate isomerase from Methylobacterium nodulans (strain LMG 21967 / CNCM I-2342 / ORS 2060).